We begin with the raw amino-acid sequence, 408 residues long: MSTAADSPLSLAHYYLPVYRPRQVVLERGQGSRVWDDQGREYLDLSSGIAVSGLGHNDPDLMAALTEQAGKLWHTSNVFFSAPPLKLAEELVTASRFAQKVFLCNSGTEANEAAIKLVRKWASSQGRPADKRVIVTFRGSFHGRTLASVTATAQPKYQEGYEPLPGGFRYVDFNDVPALESAMASGDVAAVMLEPIQGEGGVMPAAPGFLARVRALCDQHDALLVLDEIQCGMGRTGSLFAHWQEQVTPDIVTLAKALGGGFPIGAMLAGPKVAETMQFGAHGTTFGGNPLAAAVARVALRKLASPQIAENVARQSAALRAGLEALNAEFGVFAQIRGRGLMLGAVLAPAHAGQAGAILDLAAAHGLLLLQAGPDVLRFVPALNLTDAELADGLARLRLAIAAYVAQH.

Pyridoxal 5'-phosphate is bound by residues 107–108 (GT) and F141. R144 lines the N(2)-acetyl-L-ornithine pocket. 227-230 (DEIQ) lines the pyridoxal 5'-phosphate pocket. Position 256 is an N6-(pyridoxal phosphate)lysine (K256). Residue T284 coordinates N(2)-acetyl-L-ornithine. T285 contributes to the pyridoxal 5'-phosphate binding site.

It belongs to the class-III pyridoxal-phosphate-dependent aminotransferase family. ArgD subfamily. In terms of assembly, homodimer. It depends on pyridoxal 5'-phosphate as a cofactor.

The protein localises to the cytoplasm. The catalysed reaction is N(2)-acetyl-L-ornithine + 2-oxoglutarate = N-acetyl-L-glutamate 5-semialdehyde + L-glutamate. Its pathway is amino-acid biosynthesis; L-arginine biosynthesis; N(2)-acetyl-L-ornithine from L-glutamate: step 4/4. This is Acetylornithine aminotransferase from Xanthomonas campestris pv. campestris (strain ATCC 33913 / DSM 3586 / NCPPB 528 / LMG 568 / P 25).